Consider the following 176-residue polypeptide: Large ribosomal subunit protein uL6 (176 aa).

This sequence belongs to the universal ribosomal protein uL6 family. As to quaternary structure, part of the 50S ribosomal subunit.

Functionally, this protein binds to the 23S rRNA, and is important in its secondary structure. It is located near the subunit interface in the base of the L7/L12 stalk, and near the tRNA binding site of the peptidyltransferase center. The protein is Large ribosomal subunit protein uL6 of Burkholderia ambifaria (strain MC40-6).